The chain runs to 118 residues: Large ribosomal subunit protein bL19 (118 aa).

Belongs to the bacterial ribosomal protein bL19 family.

In terms of biological role, this protein is located at the 30S-50S ribosomal subunit interface and may play a role in the structure and function of the aminoacyl-tRNA binding site. This chain is Large ribosomal subunit protein bL19, found in Geotalea uraniireducens (strain Rf4) (Geobacter uraniireducens).